Reading from the N-terminus, the 335-residue chain is Fructose-1,6-bisphosphatase class 1 (335 aa).

The Mg(2+) site is built by Glu-92, Asp-114, Leu-116, and Asp-117. Substrate contacts are provided by residues 117–120 (DGSS), Asn-210, Tyr-242, and Lys-274. Glu-280 contributes to the Mg(2+) binding site.

This sequence belongs to the FBPase class 1 family. Homotetramer. Requires Mg(2+) as cofactor.

The protein resides in the cytoplasm. The catalysed reaction is beta-D-fructose 1,6-bisphosphate + H2O = beta-D-fructose 6-phosphate + phosphate. It participates in carbohydrate biosynthesis; gluconeogenesis. The polypeptide is Fructose-1,6-bisphosphatase class 1 (Lawsonia intracellularis (strain PHE/MN1-00)).